Consider the following 368-residue polypeptide: MTTLTSTPRQDGYYMPAEWAPHSQTWMVWPQRPDNWRDNAAPAQAAFAAVAKAIARFEPVTVCASAEQYLAARAALDDPRIRVVEMSSDDAWVRDTGPTFVIDDNGGLRGVDWTFNAWGGKDGGLYADWQRDDEVARKILEIEYCDRYRTEGFVLEGGSIHVDGEGTLITTEECLLNRNRNPQLSREQIEAVLREHLAVDSIIWLPHGLFNDETDGHVDNFCCFVRPGEVLLAWTDDANDPNYARCQAAMAVLQRARDAKGRALIVHKIPIPGPLHASDAECAGVVALDGSQLRDPSIRLAGSYVNFLIVNGGIIAPAFGDPLDGEAERILREVFPEHDVVMVPGREILLGGGNIHCITQQQPAPFVR.

Cysteine 357 serves as the catalytic Amidino-cysteine intermediate.

The protein belongs to the agmatine deiminase family. Homodimer.

The catalysed reaction is agmatine + H2O = N-carbamoylputrescine + NH4(+). The protein operates within amine and polyamine biosynthesis; putrescine biosynthesis via agmatine pathway; N-carbamoylputrescine from agmatine: step 1/1. Its function is as follows. Mediates the hydrolysis of agmatine into N-carbamoylputrescine in the arginine decarboxylase (ADC) pathway of putrescine biosynthesis, a basic polyamine. The polypeptide is Agmatine deiminase (Stutzerimonas stutzeri (strain A1501) (Pseudomonas stutzeri)).